Reading from the N-terminus, the 395-residue chain is Peptide-N(4)-(N-acetyl-beta-glucosaminyl)asparagine amidase (395 aa).

Residues Cys131, Cys134, Cys172, and Cys175 each coordinate Zn(2+). Cys198 acts as the Nucleophile in catalysis. Residues His232 and Asp249 contribute to the active site. Glu252 contacts substrate. Residues 363–395 (PELTKTTPSTDLPSGRQSGSTEWTKSRGENGES) are disordered. The span at 366–385 (TKTTPSTDLPSGRQSGSTEW) shows a compositional bias: polar residues. The segment covering 386 to 395 (TKSRGENGES) has biased composition (basic and acidic residues).

Belongs to the transglutaminase-like superfamily. PNGase family. Zn(2+) is required as a cofactor.

It is found in the cytoplasm. The catalysed reaction is Hydrolysis of an N(4)-(acetyl-beta-D-glucosaminyl)asparagine residue in which the glucosamine residue may be further glycosylated, to yield a (substituted) N-acetyl-beta-D-glucosaminylamine and a peptide containing an aspartate residue.. In terms of biological role, specifically deglycosylates the denatured form of N-linked glycoproteins in the cytoplasm and assists their proteasome-mediated degradation. Cleaves the beta-aspartyl-glucosamine (GlcNAc) of the glycan and the amide side chain of Asn, converting Asn to Asp. Prefers proteins containing high-mannose over those bearing complex type oligosaccharides. Can recognize misfolded proteins in the endoplasmic reticulum that are exported to the cytosol to be destroyed and deglycosylate them, while it has no activity toward native proteins. Deglycosylation is a prerequisite for subsequent proteasome-mediated degradation of some, but not all, misfolded glycoproteins. The sequence is that of Peptide-N(4)-(N-acetyl-beta-glucosaminyl)asparagine amidase (PNG1) from Candida albicans (strain SC5314 / ATCC MYA-2876) (Yeast).